The sequence spans 249 residues: MLMKRIIPCLDVKEGRVVKGVKFQNLRDLGDPVAVAKYYYEQGADELVLLDISATQEGRDTMLDIVERVAEVIYMPFTVGGGIKTLEDAKRLIRAGADKVSLNSSALQNPQLIQDISRLFGVQATVVAIDAKRTGDSWGVFSHGGTQAVGRDAIEWAKEAVSLGAGELLVTSMDADGTKDGYDLELIQRLREVVNVPLIASGGVGTLEHLAEGLEAGADAALAASIFHEATYTMPETKDYLKARGVNVR.

Catalysis depends on residues Asp11 and Asp130.

It belongs to the HisA/HisF family. In terms of assembly, heterodimer of HisH and HisF.

Its subcellular location is the cytoplasm. It catalyses the reaction 5-[(5-phospho-1-deoxy-D-ribulos-1-ylimino)methylamino]-1-(5-phospho-beta-D-ribosyl)imidazole-4-carboxamide + L-glutamine = D-erythro-1-(imidazol-4-yl)glycerol 3-phosphate + 5-amino-1-(5-phospho-beta-D-ribosyl)imidazole-4-carboxamide + L-glutamate + H(+). The protein operates within amino-acid biosynthesis; L-histidine biosynthesis; L-histidine from 5-phospho-alpha-D-ribose 1-diphosphate: step 5/9. Its function is as follows. IGPS catalyzes the conversion of PRFAR and glutamine to IGP, AICAR and glutamate. The HisF subunit catalyzes the cyclization activity that produces IGP and AICAR from PRFAR using the ammonia provided by the HisH subunit. The polypeptide is Imidazole glycerol phosphate synthase subunit HisF (Exiguobacterium sibiricum (strain DSM 17290 / CCUG 55495 / CIP 109462 / JCM 13490 / 255-15)).